Consider the following 613-residue polypeptide: DNA repair and telomere maintenance protein nbs1 (613 aa).

One can recognise an FHA domain in the interval Y23–V86. BRCT domains are found at residues F107–T186 and G228–I302. Residue S355 is modified to Phosphoserine. Disordered stretches follow at residues K381–K428 and T546–F613. Polar residues predominate over residues L387 to K399. Positions K400 to K409 are enriched in basic and acidic residues. Positions S574 to K592 are enriched in low complexity. The FxF/Y motif signature appears at F611–F613.

It belongs to the Nibrin family. In terms of assembly, component of the MRN complex composed of two heterodimers rad32 and rad50 associated with a single nbs1. Interacts with (phosphorylated) ctp1/CtIP. Interacts (via FxF/Y motif) with tel1/atm.

It is found in the nucleus. The protein localises to the chromosome. Its subcellular location is the telomere. In terms of biological role, component of the MRN complex, which plays a central role in double-strand break (DSB) repair, DNA recombination, maintenance of telomere integrity and meiosis. The MRN complex is involved in the repair of DNA double-strand breaks (DSBs) via homologous recombination (HR), an error-free mechanism which primarily occurs during S and G2 phases. The complex (1) mediates the end resection of damaged DNA, which generates proper single-stranded DNA, a key initial steps in HR, and is (2) required for the recruitment of other repair factors and efficient activation of tel1/atm upon DNA damage. The MRN complex possesses single-strand endonuclease activity and double-strand-specific 3'-5' exonuclease activity, which are provided by MRE11, to initiate end resection, which is required for single-strand invasion and recombination. Within the MRN complex, nbs1 acts as a protein-protein adapter, which specifically recognizes and binds phosphorylated proteins, promoting their recruitment to DNA damage sites. Recruits rad32 and rad50 components of the MRN complex to DSBs in response to DNA damage. Promotes the recruitment of tel1/atm to the DNA damage sites, activating tel1/atm function. Mediates the recruitment of phosphorylated ctp1/CtIP to DSBs, leading to cooperation between the MRN complex and ctp1/CtIP to initiate end resection. The sequence is that of DNA repair and telomere maintenance protein nbs1 from Schizosaccharomyces pombe (strain 972 / ATCC 24843) (Fission yeast).